A 477-amino-acid polypeptide reads, in one-letter code: Transmembrane and coiled-coil domain protein 3 (477 aa).

A disordered region spans residues 1-24 (MPGSDTALTVDRTYSDPGRHHRCK). Position 46 is a phosphoserine (S46). Coiled-coil stretches lie at residues 63 to 83 (KVKL…EQIK) and 112 to 149 (KQVF…NGVT). The interval 234 to 280 (ASPRAYGGSATIVNKPKYGSDDECSSGTSGSADSNGNQSFGAGGTST) is disordered. Residue S253 is modified to Phosphoserine. Residues 258–280 (SSGTSGSADSNGNQSFGAGGTST) are compositionally biased toward polar residues. A coiled-coil region spans residues 284-398 (QGKIAKIMEE…KLELHQQEQQ (115 aa)). The next 2 helical transmembrane spans lie at 409 to 429 (VLLG…LVCV) and 450 to 470 (FFAV…LCAI).

Belongs to the TEX28 family. As to quaternary structure, may form homodimers and heterodimers with TMCC2 or TMCC3 via the coiled-coil domains. Interacts with ribosomal proteins RPL4 and RPS6.

The protein localises to the endoplasmic reticulum membrane. The sequence is that of Transmembrane and coiled-coil domain protein 3 from Mus musculus (Mouse).